The following is a 338-amino-acid chain: GDSL esterase/lipase At5g63170 (338 aa).

Residues 1-23 (MNSLVIQTTIVLVSVISVSIVHA) form the signal peptide. Ser-35 (nucleophile) is an active-site residue. Residues Asp-313 and His-316 contribute to the active site.

The protein belongs to the 'GDSL' lipolytic enzyme family.

It is found in the secreted. The chain is GDSL esterase/lipase At5g63170 from Arabidopsis thaliana (Mouse-ear cress).